The following is a 689-amino-acid chain: Glycine--tRNA ligase beta subunit (689 aa).

The protein belongs to the class-II aminoacyl-tRNA synthetase family. In terms of assembly, tetramer of two alpha and two beta subunits.

It is found in the cytoplasm. The catalysed reaction is tRNA(Gly) + glycine + ATP = glycyl-tRNA(Gly) + AMP + diphosphate. This is Glycine--tRNA ligase beta subunit from Shewanella baltica (strain OS155 / ATCC BAA-1091).